A 342-amino-acid chain; its full sequence is Cytosolic Fe-S cluster assembly factor NBP35 (342 aa).

[4Fe-4S] cluster-binding residues include cysteine 33, cysteine 47, cysteine 50, and cysteine 56. 86–93 (GKGGVGKS) lines the ATP pocket. [4Fe-4S] cluster-binding residues include cysteine 259 and cysteine 262.

It belongs to the Mrp/NBP35 ATP-binding proteins family. NUBP1/NBP35 subfamily. As to quaternary structure, heterotetramer of 2 NBP35 and 2 CFD1 chains. [4Fe-4S] cluster serves as cofactor.

The protein resides in the cytoplasm. Functionally, component of the cytosolic iron-sulfur (Fe/S) protein assembly (CIA) machinery. Required for maturation of extramitochondrial Fe-S proteins. The NBP35-CFD1 heterotetramer forms a Fe-S scaffold complex, mediating the de novo assembly of an Fe-S cluster and its transfer to target apoproteins. The sequence is that of Cytosolic Fe-S cluster assembly factor NBP35 from Gibberella zeae (strain ATCC MYA-4620 / CBS 123657 / FGSC 9075 / NRRL 31084 / PH-1) (Wheat head blight fungus).